The sequence spans 547 residues: Chaperonin GroEL (547 aa).

ATP-binding positions include 30–33, Lys51, 87–91, Gly415, 479–481, and Asp495; these read TLGP, DGTTT, and NAA. The tract at residues 525-547 is disordered; the sequence is PKEDSPGAGAGMGGMGGMGGMDM. A compositionally biased stretch (gly residues) spans 532-547; it reads AGAGMGGMGGMGGMDM.

This sequence belongs to the chaperonin (HSP60) family. As to quaternary structure, forms a cylinder of 14 subunits composed of two heptameric rings stacked back-to-back. Interacts with the co-chaperonin GroES.

It is found in the cytoplasm. The enzyme catalyses ATP + H2O + a folded polypeptide = ADP + phosphate + an unfolded polypeptide.. In terms of biological role, together with its co-chaperonin GroES, plays an essential role in assisting protein folding. The GroEL-GroES system forms a nano-cage that allows encapsulation of the non-native substrate proteins and provides a physical environment optimized to promote and accelerate protein folding. This Nitrosomonas eutropha (strain DSM 101675 / C91 / Nm57) protein is Chaperonin GroEL.